We begin with the raw amino-acid sequence, 676 residues long: DNA ligase (676 aa).

Residues 32 to 36 (DAEYD), 81 to 82 (SL), and Glu113 each bind NAD(+). Lys115 (N6-AMP-lysine intermediate) is an active-site residue. Positions 136, 173, 291, and 315 each coordinate NAD(+). Zn(2+) is bound by residues Cys409, Cys412, Cys427, and Cys433. The BRCT domain occupies 595-676 (SEKTYFFNKK…LNSLIRIKEQ (82 aa)).

It belongs to the NAD-dependent DNA ligase family. LigA subfamily. Mg(2+) is required as a cofactor. It depends on Mn(2+) as a cofactor.

It catalyses the reaction NAD(+) + (deoxyribonucleotide)n-3'-hydroxyl + 5'-phospho-(deoxyribonucleotide)m = (deoxyribonucleotide)n+m + AMP + beta-nicotinamide D-nucleotide.. DNA ligase that catalyzes the formation of phosphodiester linkages between 5'-phosphoryl and 3'-hydroxyl groups in double-stranded DNA using NAD as a coenzyme and as the energy source for the reaction. It is essential for DNA replication and repair of damaged DNA. This chain is DNA ligase, found in Buchnera aphidicola subsp. Acyrthosiphon pisum (strain Tuc7).